Consider the following 407-residue polypeptide: Arginine deiminase (407 aa).

The active-site Amidino-cysteine intermediate is the C397.

The protein belongs to the arginine deiminase family.

The protein localises to the cytoplasm. The catalysed reaction is L-arginine + H2O = L-citrulline + NH4(+). It functions in the pathway amino-acid degradation; L-arginine degradation via ADI pathway; carbamoyl phosphate from L-arginine: step 1/2. This is Arginine deiminase from Salmonella arizonae (strain ATCC BAA-731 / CDC346-86 / RSK2980).